The primary structure comprises 409 residues: Elongation factor Tu, chloroplastic (409 aa).

The 205-residue stretch at 10-214 (KPHVNIGTIG…KIDEYIPTPE (205 aa)) folds into the tr-type G domain. The interval 19 to 26 (GHVDHGKT) is G1. 19–26 (GHVDHGKT) serves as a coordination point for GTP. Residue threonine 26 coordinates Mg(2+). Positions 60–64 (GITIN) are G2. Residues 81–84 (DCPG) form a G3 region. Residues 81–85 (DCPGH) and 136–139 (NKAD) each bind GTP. Residues 136–139 (NKAD) form a G4 region. The interval 174–176 (SAL) is G5.

This sequence belongs to the TRAFAC class translation factor GTPase superfamily. Classic translation factor GTPase family. EF-Tu/EF-1A subfamily.

Its subcellular location is the plastid. The protein resides in the chloroplast. The catalysed reaction is GTP + H2O = GDP + phosphate + H(+). In terms of biological role, GTP hydrolase that promotes the GTP-dependent binding of aminoacyl-tRNA to the A-site of ribosomes during protein biosynthesis. This Rhodomonas salina (Cryptomonas salina) protein is Elongation factor Tu, chloroplastic (tufA).